The sequence spans 770 residues: ARF GTPase-activating protein GIT1 (770 aa).

An Arf-GAP domain is found at 1-124 (MSRKGPRAEV…AFVHKLPCRD (124 aa)). Residues 1-124 (MSRKGPRAEV…AFVHKLPCRD (124 aa)) form an interaction with gamma-tubulin and localization to the centrosome region. The C4-type zinc-finger motif lies at 11 to 34 (CADCSAPDPGWASISRGVLVCDEC). ANK repeat units lie at residues 132–161 (DLSK…QANF), 166–195 (KGTT…DPGS), and 199–228 (NGRT…ELTD). Phosphotyrosine is present on Tyr-224. An interaction with PCLO region spans residues 245–374 (HYIIPQMADR…QGKSLSSPTD (130 aa)). Residues 253–424 (DRSRQKCMSQ…NRARSMDSSD (172 aa)) are interaction with PTK2/FAK1. The interaction with ARHGEF7 stretch occupies residues 254–376 (RSRQKCMSQS…KSLSSPTDNL (123 aa)). The disordered stretch occupies residues 363-425 (RQQGKSLSSP…RARSMDSSDL (63 aa)). The span at 366-383 (GKSLSSPTDNLELSARSQ) shows a compositional bias: polar residues. Residues Ser-368 and Ser-371 each carry the phosphoserine modification. Thr-373 carries the phosphothreonine modification. The segment at 375–596 (NLELSARSQS…QEGSRHASKL (222 aa)) is interaction with NCK2 and GRIN3A. Residues 375-596 (NLELSARSQS…QEGSRHASKL (222 aa)) are required for localization at synapses. 2 positions are modified to phosphoserine: Ser-379 and Ser-384. Tyr-392 bears the Phosphotyrosine mark. Phosphoserine is present on residues Ser-394 and Ser-397. A compositionally biased stretch (acidic residues) spans 394–403 (SVASDEDTDQ). Position 401 is a phosphothreonine (Thr-401). Ser-419, Ser-422, and Ser-426 each carry phosphoserine. An interaction with MAPK1 region spans residues 420–475 (MDSSDLSDGAVTLQEYLELKKALATSEAKVQQLMKVNSSLSDELRRLQREIHKLQA). Residues 429-629 (AVTLQEYLEL…EGKRFLELSK (201 aa)) form an interaction with IKBKG region. A coiled-coil region spans residues 449 to 483 (VQQLMKVNSSLSDELRRLQREIHKLQAENLQLRQP). A phosphoserine mark is found at Ser-507 and Ser-545. Thr-546 is subject to Phosphothreonine. Residues Tyr-554 and Tyr-563 each carry the phosphotyrosine modification. Phosphoserine occurs at positions 570, 580, 601, and 605. A compositionally biased stretch (polar residues) spans 578 to 588 (PSSPLLSCSQE). A disordered region spans residues 578 to 615 (PSSPLLSCSQEGSRHASKLSRHGSGADSDYENTQSGDP). The residue at position 610 (Thr-610) is a Phosphothreonine. Ser-639 is modified (phosphoserine). An interaction with PXN and TGFB1I1 region spans residues 646–770 (PGLPSTEDVI…VTITTREKKQ (125 aa)).

As to quaternary structure, forms homodimers and possibly oligomers. May forms heterooligomers with GIT2. Interacts with G protein-coupled receptor kinases, including GRK2, GRK3, GRK5 and GRK6. Interacts with PPFIA1, PPFIA2 and PPFIA4. Interacts with GRIP1 and forms a ternary complex with PPFIA1 and GRIP1. Directly interacts with ARHGEF7/beta-PIX, forming in vitro a heptameric complex made of a GIT1 dimer and an ARHGEF7 trimer. Directly interacts with PXN/paxillin; this interaction is enhanced in the presence of ARHGEF7. Directly interacts (via C-terminus) with TGFB1I1/Hic-5 (via LD motif 3). Directly interacts with PTK2/FAK1. May interact with PTK2B/PYK2; this interaction may be indirect. Interacts with AMPA receptors GRIA2/3. Directly interacts with protein Piccolo/PCLO. Forms a complex with Ephrin-B1/EFNB1 and NCK2/GRB4 (via SH2); this interaction is important for spine morphogenesis and synapse formation. Interaction with NCK2 is transient and depends upon GIT1 phosphorylation at Tyr-392. Interacts with GRIN3A/GluN3A (via C-terminus); this interaction competes with GIT1 interaction with ARHGEF7 and limits synaptic localization of GIT1. Interacts with IKBKG/NEMO in resting bone mesenchymal stem cells, as well as in TNF-stimulated cells; this interaction may increase IKBKG affinity for 'Lys-63'-linked polyubiquitin chains. Interacts with GABA(A) receptors, including GABRB3 and GABRG2. Interacts with SCRIB. Interacts (via N- and C-terminus) with ENTR1/SDCCAG3 (via N-terminus); this interaction is direct. May form a tripartite complex with ENTR1 and PTPN13. Interacts with YWHAZ. Interacts with PAK1. Interacts with PAK3. Directly interacts (via N-terminus) with gamma-tubulin. Interacts with MAPK1 and MAPK3; this interaction is required for MAPK1/3 recruitment to focal adhesions. In terms of processing, phosphorylated on tyrosine residues by PTK2/FAK1 and SRC in growing fibroblasts. Phosphorylation at Tyr-392 is induced by activation of Ephrin-B1/EFNB1 and catalyzed by SRC family kinases. It is required for the interaction with NCK2 and for GIT1 recruitment to synapses in hippocampal neurons. As to expression, expressed in the brain (at protein level). Also expressed at high levels in lung and heart. In lung, expressed in endothelial cells, especially in capillaries; also expressed in smooth muscle and epithelial cells of bronchi (at protein level). Expressed in bone marrow mesenchymal stem cells, as well as in osteoclasts and bone marrow-derived macrophages (at protein level).

The protein localises to the cytoplasm. It localises to the presynapse. The protein resides in the postsynapse. Its subcellular location is the postsynaptic density. It is found in the cell junction. The protein localises to the focal adhesion. It localises to the cell projection. The protein resides in the lamellipodium. Its subcellular location is the cytoskeleton. It is found in the microtubule organizing center. The protein localises to the centrosome. It localises to the spindle pole. Its function is as follows. GTPase-activating protein for ADP ribosylation factor family members, including ARF1. Multidomain scaffold protein that interacts with numerous proteins and therefore participates in many cellular functions, including receptor internalization, focal adhesion remodeling, and signaling by both G protein-coupled receptors and tyrosine kinase receptors. Through PAK1 activation, positively regulates microtubule nucleation during interphase. Plays a role in the regulation of cytokinesis; for this function, may act in a pathway also involving ENTR1 and PTPN13. May promote cell motility both by regulating focal complex dynamics and by the activation of RAC1. May act as scaffold for MAPK1/3 signal transduction, recruiting MAPK1/3 to focal adhesions after EGF stimulation via a Src-dependent pathway, hence stimulating cell migration. Plays a role in brain development and function. Involved in the regulation of spine density and synaptic plasticity that is required for processes involved in learning. Plays an important role in dendritic spine morphogenesis and synapse formation. In hippocampal neurons, recruits guanine nucleotide exchange factors (GEFs), such as ARHGEF7/beta-PIX, to the synaptic membrane. These in turn locally activate RAC1, which is an essential step for spine morphogenesis and synapse formation. May contribute to the organization of presynaptic active zones through oligomerization and formation of a Piccolo/PCLO-based protein network, which includes ARHGEF7/beta-PIX and FAK1. In neurons, through its interaction with liprin-alpha family members, may be required for AMPA receptor (GRIA2/3) proper targeting to the cell membrane. In complex with GABA(A) receptors and ARHGEF7, plays a crucial role in regulating GABA(A) receptor synaptic stability, maintaining GPHN/gephyrin scaffolds and hence GABAergic inhibitory synaptic transmission, by locally coordinating RAC1 and PAK1 downstream effector activity, leading to F-actin stabilization. May also be important for RAC1 downstream signaling pathway through PAK3 and regulation of neuronal inhibitory transmission at presynaptic input. Required for successful bone regeneration during fracture healing. The function in intramembranous ossification may, at least partly, exerted by macrophages in which GIT1 is a key negative regulator of redox homeostasis, IL1B production, and glycolysis, acting through the ERK1/2/NRF2/NFE2L2 axis. May play a role in angiogenesis during fracture healing. In this process, may regulate activation of the canonical NF-kappa-B signal in bone mesenchymal stem cells by enhancing the interaction between NEMO and 'Lys-63'-ubiquitinated RIPK1/RIP1, eventually leading to enhanced production of VEGFA and others angiogenic factors. Essential for VEGF signaling through the activation of phospholipase C-gamma and ERK1/2, hence may control endothelial cell proliferation and angiogenesis. This chain is ARF GTPase-activating protein GIT1 (Git1), found in Mus musculus (Mouse).